Reading from the N-terminus, the 251-residue chain is MFGLQHIWDCILQYEAQLRSPFFPVLFSITVYLSFCLPFVLLDALSPKVELIRRYKIQQKASVSWTMMWSCLALSLYNHVVYIFPLSVLHWYWRPVSYLAEAPGVLRVVWDLAACLLLFDFQYFVWHLLHHKVPWLYRTFHKVHHKYTSTFALATEYSGAWETLSLGFFAAVNPMLLGVHPMTEMLFHMLNMWLSVEDHCGYDLPWATHRLMPFGLYGGAPHHDVHHQKFKSNYAPYFTHWDKLFGTLHFE.

The next 3 helical transmembrane spans lie at 22 to 42 (FFPVLFSITVYLSFCLPFVLL), 69 to 89 (WSCLALSLYNHVVYIFPLSVL), and 108 to 128 (VVWDLAACLLLFDFQYFVWHL). The Fatty acid hydroxylase domain maps to 113–247 (AACLLLFDFQ…FTHWDKLFGT (135 aa)). The Histidine box-1 signature appears at 126 to 130 (WHLLH). The Histidine box-2 signature appears at 141–145 (HKVHH). Residues 222–228 (HHDVHHQ) carry the Histidine box-3 motif.

Belongs to the sterol desaturase family. Fe cation is required as a cofactor.

The protein resides in the endoplasmic reticulum membrane. The catalysed reaction is cholesterol + AH2 + O2 = 25-hydroxycholesterol + A + H2O. It carries out the reaction cholesterol + NADPH + O2 + H(+) = 25-hydroxycholesterol + NADP(+) + H2O. Catalyzes the formation of 25-hydroxycholesterol from cholesterol, leading to repress cholesterol biosynthetic enzymes. Plays a key role in cell positioning and movement in lymphoid tissues: 25-hydroxycholesterol is an intermediate in biosynthesis of 7-alpha,25-dihydroxycholesterol (7-alpha,25-OHC), an oxysterol that acts as a ligand for the G protein-coupled receptor GPR183/EBI2, a chemotactic receptor for a number of lymphoid cells. May play an important role in regulating lipid metabolism by synthesizing a corepressor that blocks sterol regulatory element binding protein (SREBP) processing. In testis, production of 25-hydroxycholesterol by macrophages may play a role in Leydig cell differentiation. The protein is Cholesterol 25-hydroxylase-like protein (ch25h) of Danio rerio (Zebrafish).